A 2067-amino-acid chain; its full sequence is Lipoxygenase homology domain-containing protein 1 (2067 aa).

15 consecutive PLAT domains span residues 43–160 (RVYE…RDLL), 172–287 (NKYE…RDIL), 296–412 (ITYI…RQLY), 425–540 (FPWS…REMT), 553–673 (ARYH…RELL), 684–803 (FRYH…VELY), 814–934 (VHYE…RELL), 969–1087 (TTFS…RDLF), 1100–1225 (VPYE…RELV), 1254–1372 (VLYS…RLFY), 1421–1539 (IPYY…RVFD), 1552–1667 (VLYE…CEMC), 1679–1797 (TSYT…RDFA), 1810–1931 (TTYE…VFEV), and 1948–2064 (VKYE…RDLF).

It localises to the cell projection. The protein localises to the stereocilium. In terms of biological role, involved in hearing. Required for normal function of hair cells in the inner ear. This is Lipoxygenase homology domain-containing protein 1 (LOXHD1) from Homo sapiens (Human).